We begin with the raw amino-acid sequence, 364 residues long: MEHNGSASNADKIHQNRLSSVTEDEDQDAALTIVTVLDKVASIVDSVQASQKRIEERHREMENAIKSVQIDLLKLSQSHSNTGHIINKLFEKTRKVSAHIKDVKARVEKQQIHVKKVEVKQEEIMKKNKFRVVIFQEKFRCPTSLSVVKDRNLTENQEEDDDDIFDPPVDLSSDEEYYVEESRSARLRKSGKEHIDNIKKAFSKENMQKTRQNLDKKVNRIRTRIVTPERRERLRQSGERLRQSGERLRQSGERFKKSISNAAPSKEAFKMRSLRKGKDRTVAEGEECAREMGVDIIARSESLGPISELYSDELSEPEHEAARPVYPPHEGREIPTPEPLKVTFKSQVKVEDDESLLLDLKHSS.

Positions 1 to 24 (MEHNGSASNADKIHQNRLSSVTED) are disordered. Positions 44-77 (VDSVQASQKRIEERHREMENAIKSVQIDLLKLSQ) form a coiled coil. Phosphoserine is present on residues S172 and S173. A coiled-coil region spans residues 202–226 (FSKENMQKTRQNLDKKVNRIRTRIV). Residues 231–256 (RERLRQSGERLRQSGERLRQSGERFK) are compositionally biased toward basic and acidic residues. 2 disordered regions span residues 231–283 (RERL…RTVA) and 311–339 (SDEL…TPEP). Y326 carries the post-translational modification Phosphotyrosine. T336 bears the Phosphothreonine mark. The residue at position 355 (S355) is a Phosphoserine.

This sequence belongs to the CAVIN family. In terms of assembly, component of the CAVIN complex composed of CAVIN1, CAVIN2, CAVIN3 and CAVIN4. Interacts with CAVIN1, ADRA1A and ADRA1B. Interacts with CAVIN2; this augments the transactivation of NPPA. Interacts with CAV3. Interacts with MAPK1 and MAPK3.

Its subcellular location is the cytoplasm. It localises to the myofibril. It is found in the sarcomere. The protein localises to the cytosol. The protein resides in the cell membrane. Its subcellular location is the sarcolemma. It localises to the membrane. It is found in the caveola. Its function is as follows. Modulates the morphology of formed caveolae in cardiomyocytes, but is not required for caveolar formation. Facilitates the recruitment of MAPK1/3 to caveolae within cardiomyocytes and regulates alpha-1 adrenergic receptor-induced hypertrophic responses in cardiomyocytes through MAPK1/3 activation. Contributes to proper membrane localization and stabilization of caveolin-3 (CAV3) in cardiomyocytes. Induces RHOA activation and activates NPPA transcription and myofibrillar organization through the Rho/ROCK signaling pathway. The sequence is that of Caveolae-associated protein 4 from Homo sapiens (Human).